Reading from the N-terminus, the 385-residue chain is WD repeat-containing protein RUP1 (385 aa).

7 WD repeats span residues 69–108 (TGSD…ESRD), 119–160 (CTPA…PVSE), 163–205 (EHGG…TLEE), 210–250 (GGGA…DPLI), 254–292 (GHTK…RVVR), 298–337 (VNSR…PVWV), and 348–385 (SDRR…GKQS).

Interacts with UVR8. Interacts directly with DHU1.

It localises to the nucleus. It is found in the cytoplasm. The protein resides in the cytosol. In terms of biological role, functions in association with RUP2 as repressor of UV-B-induced photomorphogenesis mediated by UVR8 and HY5, likely in coordination with DHU1. Plays a crucial negative feedback regulatory role downstream of UVR8-COP1 to inhibit UVR8 function, balance UV-B-specific responses and ensure normal plant growth. Is involved in the regulation of photoperiodic flowering and vegetative development. In Arabidopsis thaliana (Mouse-ear cress), this protein is WD repeat-containing protein RUP1.